Reading from the N-terminus, the 182-residue chain is Oligoribonuclease (182 aa).

The 164-residue stretch at 8–171 (LIWLDMEMTG…ADIHESIGEL (164 aa)) folds into the Exonuclease domain. Tyrosine 129 is an active-site residue.

It belongs to the oligoribonuclease family.

It is found in the cytoplasm. Its function is as follows. 3'-to-5' exoribonuclease specific for small oligoribonucleotides. The protein is Oligoribonuclease of Azoarcus sp. (strain BH72).